A 120-amino-acid polypeptide reads, in one-letter code: UPF0344 protein BCAH187_A1308 (120 aa).

4 consecutive transmembrane segments (helical) span residues 6–26 (ITAWALGLILFFVAYSLYSAG), 32–52 (VHMGLRLMYIIIIVTGVWLYL), 64–84 (WYGLKMLAGILVIAGMEMVLV), and 91–111 (ATGAFWGLFIIALVAVFYLGL).

Belongs to the UPF0344 family.

The protein localises to the cell membrane. The polypeptide is UPF0344 protein BCAH187_A1308 (Bacillus cereus (strain AH187)).